Here is a 77-residue protein sequence, read N- to C-terminus: Acyl carrier protein (77 aa).

Residues 2-77 enclose the Carrier domain; that stretch reads SNIEERVRNI…SAIDYVVNNG (76 aa). Ser-37 bears the O-(pantetheine 4'-phosphoryl)serine mark.

It belongs to the acyl carrier protein (ACP) family. In terms of processing, 4'-phosphopantetheine is transferred from CoA to a specific serine of apo-ACP by AcpS. This modification is essential for activity because fatty acids are bound in thioester linkage to the sulfhydryl of the prosthetic group.

It localises to the cytoplasm. Its pathway is lipid metabolism; fatty acid biosynthesis. Functionally, carrier of the growing fatty acid chain in fatty acid biosynthesis. In Psychromonas ingrahamii (strain DSM 17664 / CCUG 51855 / 37), this protein is Acyl carrier protein.